We begin with the raw amino-acid sequence, 1014 residues long: SYGYDEKGGISVPGPMGPSGPRGLPGPPGPGPQGFQGPPGEPGEPGSSGPMGPRGPPGPPGKNGDDGEAGKPGRPGERGPPGPQGARGLPGTAGLPGMKGHRGFSGLDGAKGDAGPAGPKGEPGSPGENGAPGQMGPRGLPGERGRPGASGPAGARGNDGATGAAGPPGPTGPAGPPGFPGAVGAKGEAGPQGARGSEGPQGVRGEPGPPGPAGAAGPAGNPGADGQPGAKGANGAPGIAGAPGFPGARGPSGPQGPSGPPGPKGNSGEPGAPGSKGDTGAKGEPGPTGIQGPPGPAGEEGKRGARGEPGPTGLPGPPGERGGPGSRGFPGADGVAGPKGPAGERGSPGPAGPKGSPGEAGRPGEAGLPGAKGLTGSPGSPGPDGKTGPPGPAGQDGRPGPPGPPGARGQAGVMGFPGPKGAAGEPGKAGERGVPGPPGAVGPAGKDGEAGAQGPPGPAGPAGERGEQGPAGPGFQGLPGPAGPPGEAGKPGEQGVPGDLGAPGPSGARGERGFPGERGVQGPPGPAGPRGNGAPGNDGAKGDSQGAPGLQGMPGERGAAGLPGPKGDRGDAGPKGADGAPGKDGVRGLTGPIGPPGPAGAPGDKGESGPSGPAGPTGARGAPGDRGEPGPPGPAGFAGPPGADGQPGAKGEPGDAGAKGDAGPSGPAGPTGPPGPIGNVGAPGPKGARGSAGPPGATGFPGAAGRVGPPGPSGNAGPPGPPGPVGKEGGKGPRGETGPAGRPGEVGPPGPPGPGEKGSPGADGPAGAPGTPGPQGISGQRGVVGLPGQRGERGFPGLPGPSGEPGKQGPSGSSGERGPPGPVGPPGLAGPPGESGREGAPGAEGSPGRDGSPGPKGDRGETGPGPPGAPGAPGAPGPVGPAGKNGDRGETGPAGPAGPAGPAGARGPAGPQGPRGDKGETGEQGDRGIKGHRGFSGLQGPAGPPGSPGEQGPSGASGPAGPRGPPGSAGSPGKDGLNGLPGPIGPPGPRGRTGDAGPVGPPGPPGPPGPPGPP.

The tract at residues 1–1014 (SYGYDEKGGI…PGPPGPPGPP (1014 aa)) is disordered. The segment covering 9-22 (GISVPGPMGPSGPR) has biased composition (low complexity). Residues Pro-25, Pro-28, Pro-30, Pro-39, Pro-42, Pro-45, Pro-60, Pro-75, Pro-81, Pro-90, and Pro-96 each carry the 4-hydroxyproline modification. Residues 33 to 51 (QGFQGPPGEPGEPGSSGPM) are compositionally biased toward low complexity. Residues 63–77 (NGDDGEAGKPGRPGE) are compositionally biased toward basic and acidic residues. A 5-hydroxylysine; alternate modification is found at Lys-99. Lys-99 carries an O-linked (Gal...) hydroxylysine; alternate glycan. Position 105 is a phosphoserine (Ser-105). Over residues 113–129 (DAGPAGPKGEPGSPGEN) the composition is skewed to low complexity. Pro-123, Pro-126, Pro-132, Pro-141, Pro-147, Pro-168, Pro-177, Pro-180, Pro-207, Pro-210, Pro-222, Pro-228, Pro-237, Pro-243, Pro-246, and Pro-261 each carry 4-hydroxyproline. The span at 147–165 (PGASGPAGARGNDGATGAA) shows a compositional bias: low complexity. Residues 167-179 (PPGPTGPAGPPGF) show a composition bias toward pro residues. Over residues 213–252 (AGAAGPAGNPGADGQPGAKGANGAPGIAGAPGFPGARGPS) the composition is skewed to low complexity. At Lys-264 the chain carries 5-hydroxylysine. 4-hydroxyproline occurs at positions 270, 273, 285, 294, 309, 315, 324, and 330. Over residues 319-328 (GERGGPGSRG) the composition is skewed to gly residues. 5-hydroxylysine is present on Lys-339. 4-hydroxyproline occurs at positions 348, 357, 363, 369, 378, 381, 390, 399, 405, 417, 426, 435, 438, 456, 473, 479, 485, 491, 497, 503, 515, 524, 535, 548, 554, and 563. Residues 372–398 (KGLTGSPGSPGPDGKTGPPGPAGQDGR) are compositionally biased toward low complexity. The span at 407–426 (ARGQAGVMGFPGPKGAAGEP) shows a compositional bias: low complexity. A compositionally biased stretch (low complexity) spans 485–494 (PGEAGKPGEQ). Lys-575 is modified (5-hydroxylysine). 4-hydroxyproline is present on residues Pro-581, Pro-596, and Pro-602. Low complexity predominate over residues 608–622 (SGPSGPAGPTGARGA). At Ser-611 the chain carries Phosphoserine. A 4-hydroxyproline mark is found at Pro-623, Pro-629, Pro-632, Pro-641, Pro-647, Pro-674, and Pro-683. Residues 635–665 (AGFAGPPGADGQPGAKGEPGDAGAKGDAGPS) are compositionally biased toward low complexity. Lys-686 bears the 5-hydroxylysine mark. The segment covering 691–707 (SAGPPGATGFPGAAGRV) has biased composition (low complexity). Residues Pro-695 and Pro-701 each carry the 4-hydroxyproline modification. Position 709 is a 3-hydroxyproline (Pro-709). 4-hydroxyproline occurs at positions 710, 719, 722, 743, 752, 760, 769, 787, 796, 799, 805, 820, 826, 832, 841, and 847. Positions 736-745 (ETGPAGRPGE) are enriched in low complexity. Residues 757-769 (KGSPGADGPAGAP) are compositionally biased toward low complexity. A compositionally biased stretch (pro residues) spans 819–829 (PPGPVGPPGLA). Lys-856 bears the 5-hydroxylysine mark. The span at 864 to 879 (PGPPGAPGAPGAPGPV) shows a compositional bias: pro residues. 4-hydroxyproline is present on residues Pro-867, Pro-870, and Pro-873. Low complexity predominate over residues 900–914 (AGPAGARGPAGPQGP). A compositionally biased stretch (basic and acidic residues) spans 915–929 (RGDKGETGEQGDRGI). 5-hydroxylysine is present on Lys-918. Lys-930 bears the 5-hydroxylysine; alternate mark. Lys-930 carries an O-linked (Gal...) hydroxylysine; alternate glycan. 4 positions are modified to 4-hydroxyproline: Pro-945, Pro-948, Pro-966, and Pro-981. Residues 948 to 981 (PGEQGPSGASGPAGPRGPPGSAGSPGKDGLNGLP) are compositionally biased toward low complexity. Pro-986 bears the 3-hydroxyproline mark. Pro-987 is modified (4-hydroxyproline). A compositionally biased stretch (pro residues) spans 999 to 1014 (VGPPGPPGPPGPPGPP). Position 1001 is a 3-hydroxyproline (Pro-1001). The residue at position 1002 (Pro-1002) is a 4-hydroxyproline. Pro-1004 carries the 3-hydroxyproline modification. At Pro-1005 the chain carries 4-hydroxyproline. Pro-1007 is modified (3-hydroxyproline). 4-hydroxyproline is present on residues Pro-1008, Pro-1011, and Pro-1014.

It belongs to the fibrillar collagen family. As to quaternary structure, trimers of one alpha 2(I) and two alpha 1(I) chains. In terms of processing, contains mostly 4-hydroxyproline. Proline residues at the third position of the tripeptide repeating unit (G-X-Y) are hydroxylated in some or all of the chains. Post-translationally, contains 3-hydroxyproline at a few sites. This modification occurs on the first proline residue in the sequence motif Gly-Pro-Hyp, where Hyp is 4-hydroxyproline. Lysine residues at the third position of the tripeptide repeating unit (G-X-Y) are 5-hydroxylated in some or all of the chains. In terms of processing, O-glycosylated on hydroxylated lysine residues. The O-linked glycan consists of a Glc-Gal disaccharide. As to expression, expressed in bones.

The protein localises to the secreted. The protein resides in the extracellular space. It localises to the extracellular matrix. Its function is as follows. Type I collagen is a member of group I collagen (fibrillar forming collagen). The protein is Collagen alpha-1(I) chain of Megatherium americanum (Giant ground sloth).